We begin with the raw amino-acid sequence, 239 residues long: 7-cyano-7-deazaguanine synthase (239 aa).

13–23 (FSGGQDSTTCL) contacts ATP. Cys-192, Cys-201, Cys-204, and Cys-207 together coordinate Zn(2+).

This sequence belongs to the QueC family. It depends on Zn(2+) as a cofactor.

The enzyme catalyses 7-carboxy-7-deazaguanine + NH4(+) + ATP = 7-cyano-7-deazaguanine + ADP + phosphate + H2O + H(+). Its pathway is purine metabolism; 7-cyano-7-deazaguanine biosynthesis. Its function is as follows. Catalyzes the ATP-dependent conversion of 7-carboxy-7-deazaguanine (CDG) to 7-cyano-7-deazaguanine (preQ(0)). The protein is 7-cyano-7-deazaguanine synthase of Shewanella sp. (strain MR-7).